The chain runs to 476 residues: Nuclear envelope morphology protein 1 (476 aa).

A disordered region spans residues 47 to 74 (RRRSSYSASSLSSLSSKPTEKEVPTRNE). A compositionally biased stretch (low complexity) spans 51-62 (SYSASSLSSLSS). Basic and acidic residues predominate over residues 64–74 (PTEKEVPTRNE). A helical transmembrane segment spans residues 123-139 (FFWGLCRFVFFPVLLSY). Disordered regions lie at residues 164-190 (SSHQ…SNGN) and 232-256 (GKAN…PAND). Residues 234–256 (ANSNRSGHSHQPQSTQFSPPAND) are compositionally biased toward polar residues. N237, N257, N284, and N356 each carry an N-linked (GlcNAc...) asparagine glycan. The FCP1 homology domain maps to 299–460 (SKLPRKTLVL…LNLLSFLHAL (162 aa)).

It belongs to the Dullard family. Component of the nem1-spo7 complex.

The protein localises to the endoplasmic reticulum membrane. Its subcellular location is the nucleus membrane. It carries out the reaction O-phospho-L-seryl-[protein] + H2O = L-seryl-[protein] + phosphate. It catalyses the reaction O-phospho-L-threonyl-[protein] + H2O = L-threonyl-[protein] + phosphate. Its function is as follows. Catalytic component of the nem1-spo7 complex which acts as a phosphatase and may be required for proper nuclear membrane morphology. The chain is Nuclear envelope morphology protein 1 (nem1) from Schizosaccharomyces pombe (strain 972 / ATCC 24843) (Fission yeast).